The following is a 930-amino-acid chain: Isoleucine--tRNA ligase (930 aa).

The 'HIGH' region signature appears at 57 to 67 (PYANGHLHLGH). E555 provides a ligand contact to L-isoleucyl-5'-AMP. The 'KMSKS' region motif lies at 596-600 (KMSKS). K599 provides a ligand contact to ATP. Residues C896, C899, C916, and C919 each coordinate Zn(2+).

The protein belongs to the class-I aminoacyl-tRNA synthetase family. IleS type 1 subfamily. Monomer. The cofactor is Zn(2+).

The protein resides in the cytoplasm. The enzyme catalyses tRNA(Ile) + L-isoleucine + ATP = L-isoleucyl-tRNA(Ile) + AMP + diphosphate. Functionally, catalyzes the attachment of isoleucine to tRNA(Ile). As IleRS can inadvertently accommodate and process structurally similar amino acids such as valine, to avoid such errors it has two additional distinct tRNA(Ile)-dependent editing activities. One activity is designated as 'pretransfer' editing and involves the hydrolysis of activated Val-AMP. The other activity is designated 'posttransfer' editing and involves deacylation of mischarged Val-tRNA(Ile). The sequence is that of Isoleucine--tRNA ligase from Moorella thermoacetica (strain ATCC 39073 / JCM 9320).